The following is a 340-amino-acid chain: Flap endonuclease 1 (340 aa).

Positions 1 to 98 are N-domain; sequence MGVDLGGLVE…ETIKARAEVR (98 aa). Asp-27, Asp-80, Glu-151, Glu-153, Asp-172, Asp-174, and Asp-235 together coordinate Mg(2+). The I-domain stretch occupies residues 115–256; that stretch reads EAYKYAQAST…TALKLVKKHG (142 aa). The tract at residues 332-340 is interaction with PCNA; the sequence is KQKTLSSWF.

Belongs to the XPG/RAD2 endonuclease family. FEN1 subfamily. Interacts with PCNA. PCNA stimulates the nuclease activity without altering cleavage specificity. Requires Mg(2+) as cofactor.

Its function is as follows. Structure-specific nuclease with 5'-flap endonuclease and 5'-3' exonuclease activities involved in DNA replication and repair. During DNA replication, cleaves the 5'-overhanging flap structure that is generated by displacement synthesis when DNA polymerase encounters the 5'-end of a downstream Okazaki fragment. Binds the unpaired 3'-DNA end and kinks the DNA to facilitate 5' cleavage specificity. Cleaves one nucleotide into the double-stranded DNA from the junction in flap DNA, leaving a nick for ligation. Also involved in the base excision repair (BER) pathway. Acts as a genome stabilization factor that prevents flaps from equilibrating into structures that lead to duplications and deletions. Also possesses 5'-3' exonuclease activity on nicked or gapped double-stranded DNA. This is Flap endonuclease 1 from Methanocella arvoryzae (strain DSM 22066 / NBRC 105507 / MRE50).